The sequence spans 189 residues: Phomopsin biosynthesis cluster protein C' (189 aa).

This sequence belongs to the oryJ family.

Functionally, part of the gene cluster that mediates the biosynthesis of the phomopsins, a group of hexapeptide mycotoxins which infects lupins and causes lupinosis disease in livestock. The role of phomC' within the phomopsins biosynthesis pathway has still to be determined. The pathway starts with the processing of the precursor phomA by several endopeptidases including kexin proteases as well as the cluster-specific S41 family peptidase phomP1 and the oligopeptidase phomG to produce 10 identical copies of the hexapeptide Tyr-Val-Ile-Pro-Ile-Asp. After being excised from the precursor peptide, the core peptides are cyclized and modified post-translationally by enzymes encoded within the gene cluster. The timing and order of proteolysis of the phomA precursor and PTMs are still unknown. Two tyrosinase-like enzymes, phomQ1 and phomQ2, catalyze the chlorination and hydroxylation of Tyr, respectively. PhomYb, is proposed to be involved in the construction of the macrocyclic structure. The other 4 ustYa family proteins may be involved in PTMs that generate the unique structure of phomopsin A. PhomYa is required for the hydroxylation of C-beta of Tyr. PhomYc, phomYd, and phomYe are responsible for the biosynthesis of 2,3-dehydroisoleucine (dIle), 2,3-dehydroaspartic acid (dAsp), and 3,4-dehydroproline (dPro), respectively. While dIle formation by phomYc is indispensable for the installation of dAsp by phomYd, the order of the other PTMs have not been elucidated yet. Most of the biosynthetic enzymes likely have broad substrate specificity, and thus, there might be a metabolic grid from a precursor to phomopsin A. The enzyme(s) responsible for the biosynthesis of 3,4-dehydrovaline (dVal) have also not been identified yet. Finally, phomM acts as an S-adenosylmethionine-dependent alpha-N-methyltransferase that catalyzes two successive N-methylation reactions, converting N-desmethyl-phomopsin A to phomopsin A and phomopsin A further to an N,N-dimethylated congener called phomopsin E. This chain is Phomopsin biosynthesis cluster protein C', found in Diaporthe leptostromiformis (Lupinosis disease fungus).